The sequence spans 141 residues: MTNWINTVSRDHVERGVRGRFTQANHGKPHMLRKMARGDWIVFYSPKTEHPNGAPLQAFTAIGQVADDEPYQVEITGDFQPWRRNVDFLESVETPIRPLIDSLDFIEDKSRWGYKFRFGVFRIDDHDLDVIRSAMAVDLCA.

Belongs to the UPF0310 family.

This is UPF0310 protein Mflv_0785 from Mycolicibacterium gilvum (strain PYR-GCK) (Mycobacterium gilvum (strain PYR-GCK)).